The following is a 356-amino-acid chain: Heat-inducible transcription repressor HrcA (356 aa).

It belongs to the HrcA family.

Its function is as follows. Negative regulator of class I heat shock genes (grpE-dnaK-dnaJ and groELS operons). Prevents heat-shock induction of these operons. This is Heat-inducible transcription repressor HrcA from Brucella abortus (strain S19).